Here is a 503-residue protein sequence, read N- to C-terminus: Probable cytochrome P450 6a19 (503 aa).

C445 contributes to the heme binding site.

The protein belongs to the cytochrome P450 family. The cofactor is heme.

It localises to the endoplasmic reticulum membrane. The protein resides in the microsome membrane. Its function is as follows. May be involved in the metabolism of insect hormones and in the breakdown of synthetic insecticides. This is Probable cytochrome P450 6a19 (Cyp6a19) from Drosophila melanogaster (Fruit fly).